Consider the following 450-residue polypeptide: Protein tailless (450 aa).

The nuclear receptor DNA-binding region spans 31–108; it reads HVPCKVCRDH…VGMNKDAVQH (78 aa). 2 consecutive NR C4-type zinc fingers follow at residues 34 to 54 and 70 to 96; these read CKVC…CDGC and CKSQ…LRKC. Positions 187–448 constitute an NR LBD domain; sequence VPRVPHHPVH…RLISDMYSQR (262 aa).

It belongs to the nuclear hormone receptor family. NR2 subfamily. In terms of assembly, monomer.

The protein resides in the nucleus. Functionally, orphan receptor that binds DNA as a monomer to hormone response elements (HRE) containing an extended core motif half-site sequence 5'-AAGTCA-3' in which the 5' flanking nucleotides participate in determining receptor specificity. This receptor binds to the consensus sequence [AG][AG]AAGTCAA. Plays a key role in the establishment of non-metameric domains at the anterior and posterior poles of the embryo. It may also play a role in the nervous system. The maternal terminal pathway activates the tll gene in the termini; TLL activity then represses segmentation and activates terminal-specific genes in these domains. Involved in the regulation of early eye development. In the embryonic visual system anlage drives cells to optic lobe as opposed to Bolwig's organ fate. In Drosophila virilis (Fruit fly), this protein is Protein tailless (tll).